We begin with the raw amino-acid sequence, 166 residues long: Putative peroxiredoxin (166 aa).

The Thioredoxin domain maps to 1-166 (EIGSTIPNAT…SSAATVLSKL (166 aa)). The active-site Cysteine sulfenic acid (-SOH) intermediate is cysteine 56. Positions 164–166 (SKL) match the Microbody targeting signal motif.

The protein belongs to the peroxiredoxin family. Prx5 subfamily. Homodimer; disulfide-linked, upon oxidation.

The catalysed reaction is a hydroperoxide + [thioredoxin]-dithiol = an alcohol + [thioredoxin]-disulfide + H2O. Functionally, thiol-specific peroxidase that catalyzes the reduction of hydrogen peroxide and organic hydroperoxides to water and alcohols, respectively. Plays a role in cell protection against oxidative stress by detoxifying peroxides and as sensor of hydrogen peroxide-mediated signaling events. The sequence is that of Putative peroxiredoxin from Malassezia furfur (Pityriasis versicolor infection agent).